We begin with the raw amino-acid sequence, 520 residues long: Nuclear GTP-binding protein NUG1 (520 aa).

2 stretches are compositionally biased toward basic residues: residues 1 to 13 (MRVR…RTST) and 21 to 34 (KKAS…KKMA). Residues 1 to 53 (MRVRKRQSRRTSTKLKEGIKKKASAHRKKEKKMAKKDVTWRSRSKKDPGIPSN) form a disordered region. Over residues 35–48 (KKDVTWRSRSKKDP) the composition is skewed to basic and acidic residues. The CP-type G domain maps to 165 to 343 (YDKIFKSVID…ILDSPGICFP (179 aa)). GTP contacts are provided by residues 213-216 (NKVD), 287-294 (GYPNVGKS), and 336-339 (DSPG). Position 337 is a phosphoserine (serine 337).

Belongs to the TRAFAC class YlqF/YawG GTPase family.

The protein resides in the nucleus. GTPase required for 60S ribosomal subunit export to the cytoplasm. This chain is Nuclear GTP-binding protein NUG1 (NUG1), found in Saccharomyces cerevisiae (strain ATCC 204508 / S288c) (Baker's yeast).